Here is a 263-residue protein sequence, read N- to C-terminus: HTH-type transcriptional repressor NanR (263 aa).

The tract at residues 1 to 22 is disordered; that stretch reads MGLMNAFDSQTEDSSPAIGRNL. Residues 30–98 enclose the HTH gntR-type domain; sequence KKLSEMVEEE…NGERARVSRP (69 aa). The segment at residues 58–77 is a DNA-binding region (H-T-H motif); it reads ERELMAFFNVGRPSVREALA.

Belongs to the NanR family.

Its function is as follows. Transcriptional repressor that controls expression of the genes required for the catabolism of sialic acids. This is HTH-type transcriptional repressor NanR from Shigella sonnei (strain Ss046).